The primary structure comprises 136 residues: ATP synthase epsilon chain, chloroplastic (136 aa).

The protein belongs to the ATPase epsilon chain family. As to quaternary structure, F-type ATPases have 2 components, CF(1) - the catalytic core - and CF(0) - the membrane proton channel. CF(1) has five subunits: alpha(3), beta(3), gamma(1), delta(1), epsilon(1). CF(0) has three main subunits: a, b and c.

Its subcellular location is the plastid. It localises to the chloroplast thylakoid membrane. Produces ATP from ADP in the presence of a proton gradient across the membrane. The polypeptide is ATP synthase epsilon chain, chloroplastic (Tetradesmus obliquus (Green alga)).